Reading from the N-terminus, the 121-residue chain is Prefoldin subunit beta (121 aa).

Belongs to the prefoldin subunit beta family. As to quaternary structure, heterohexamer of two alpha and four beta subunits.

It localises to the cytoplasm. Its function is as follows. Molecular chaperone capable of stabilizing a range of proteins. Seems to fulfill an ATP-independent, HSP70-like function in archaeal de novo protein folding. This chain is Prefoldin subunit beta, found in Methanosphaerula palustris (strain ATCC BAA-1556 / DSM 19958 / E1-9c).